The sequence spans 576 residues: Probable proline--tRNA ligase, mitochondrial (576 aa).

The protein belongs to the class-II aminoacyl-tRNA synthetase family.

It localises to the mitochondrion. It carries out the reaction tRNA(Pro) + L-proline + ATP = L-prolyl-tRNA(Pro) + AMP + diphosphate. In Saccharomyces cerevisiae (strain ATCC 204508 / S288c) (Baker's yeast), this protein is Probable proline--tRNA ligase, mitochondrial (AIM10).